A 165-amino-acid chain; its full sequence is Small ribosomal subunit protein uS5 (165 aa).

The S5 DRBM domain occupies 10–73 (LVEKLVAVDR…EAARRNMITV (64 aa)).

This sequence belongs to the universal ribosomal protein uS5 family. As to quaternary structure, part of the 30S ribosomal subunit. Contacts proteins S4 and S8.

With S4 and S12 plays an important role in translational accuracy. In terms of biological role, located at the back of the 30S subunit body where it stabilizes the conformation of the head with respect to the body. This Acinetobacter baumannii (strain AB307-0294) protein is Small ribosomal subunit protein uS5.